We begin with the raw amino-acid sequence, 231 residues long: Probable septum site-determining protein MinC (231 aa).

The protein belongs to the MinC family. Interacts with MinD and FtsZ.

Functionally, cell division inhibitor that blocks the formation of polar Z ring septums. Rapidly oscillates between the poles of the cell to destabilize FtsZ filaments that have formed before they mature into polar Z rings. Prevents FtsZ polymerization. The polypeptide is Probable septum site-determining protein MinC (Bradyrhizobium diazoefficiens (strain JCM 10833 / BCRC 13528 / IAM 13628 / NBRC 14792 / USDA 110)).